Reading from the N-terminus, the 101-residue chain is MAKQSMKAREVKRVALADKYFAKRAELKAIISDVDATDEDRWNAVLKLQTLPRDSSPSRQRNRCRQTGRPHAFLRKFGLSRIKVREAAMRGEIPGLKKASW.

Belongs to the universal ribosomal protein uS14 family. As to quaternary structure, part of the 30S ribosomal subunit. Contacts proteins S3 and S10.

Its function is as follows. Binds 16S rRNA, required for the assembly of 30S particles and may also be responsible for determining the conformation of the 16S rRNA at the A site. This is Small ribosomal subunit protein uS14 from Salmonella paratyphi A (strain ATCC 9150 / SARB42).